We begin with the raw amino-acid sequence, 511 residues long: Histidine ammonia-lyase (511 aa).

The 5-imidazolinone (Ala-Gly) cross-link spans 142–144 (ASG). 2,3-didehydroalanine (Ser) is present on serine 143.

This sequence belongs to the PAL/histidase family. Contains an active site 4-methylidene-imidazol-5-one (MIO), which is formed autocatalytically by cyclization and dehydration of residues Ala-Ser-Gly.

The protein resides in the cytoplasm. The catalysed reaction is L-histidine = trans-urocanate + NH4(+). The protein operates within amino-acid degradation; L-histidine degradation into L-glutamate; N-formimidoyl-L-glutamate from L-histidine: step 1/3. This is Histidine ammonia-lyase from Brucella ovis (strain ATCC 25840 / 63/290 / NCTC 10512).